The primary structure comprises 98 residues: uncharacterized protein (98 aa).

This is an uncharacterized protein from Dictyostelium discoideum (Social amoeba).